Here is a 258-residue protein sequence, read N- to C-terminus: Imidazole glycerol phosphate synthase subunit HisF (258 aa).

Residues aspartate 11 and aspartate 130 contribute to the active site.

Belongs to the HisA/HisF family. As to quaternary structure, heterodimer of HisH and HisF.

The protein resides in the cytoplasm. It carries out the reaction 5-[(5-phospho-1-deoxy-D-ribulos-1-ylimino)methylamino]-1-(5-phospho-beta-D-ribosyl)imidazole-4-carboxamide + L-glutamine = D-erythro-1-(imidazol-4-yl)glycerol 3-phosphate + 5-amino-1-(5-phospho-beta-D-ribosyl)imidazole-4-carboxamide + L-glutamate + H(+). The protein operates within amino-acid biosynthesis; L-histidine biosynthesis; L-histidine from 5-phospho-alpha-D-ribose 1-diphosphate: step 5/9. Its function is as follows. IGPS catalyzes the conversion of PRFAR and glutamine to IGP, AICAR and glutamate. The HisF subunit catalyzes the cyclization activity that produces IGP and AICAR from PRFAR using the ammonia provided by the HisH subunit. The chain is Imidazole glycerol phosphate synthase subunit HisF from Salmonella arizonae (strain ATCC BAA-731 / CDC346-86 / RSK2980).